Reading from the N-terminus, the 92-residue chain is Kinetoplastid membrane protein 11C (92 aa).

This sequence belongs to the KMP-11 family. In terms of assembly, monomer.

It is found in the cytoplasm. The protein resides in the cytoskeleton. It localises to the cell projection. The protein localises to the cilium. Its subcellular location is the flagellum. May be involved in the regulation of the cytoskeleton through interaction with the subpellicular microtubules. May be involved in parasite mobility and attachment to the surface of the host cell. Behaves as a strong immunogen during infection. The polypeptide is Kinetoplastid membrane protein 11C (KMP-11C) (Leishmania infantum).